The primary structure comprises 78 residues: Bowman-Birk type proteinase inhibitors I-A, I-B, and I-A' (78 aa).

Intrachain disulfides connect Cys-18–Cys-72, Cys-19–Cys-34, Cys-22–Cys-68, Cys-24–Cys-32, Cys-42–Cys-49, Cys-46–Cys-61, and Cys-51–Cys-59.

This sequence belongs to the Bowman-Birk serine protease inhibitor family.

Its function is as follows. These inhibitors strongly inhibit trypsin. The chain is Bowman-Birk type proteinase inhibitors I-A, I-B, and I-A' from Phaseolus angularis (Azuki bean).